Here is a 434-residue protein sequence, read N- to C-terminus: MPIITDVYAREVLDSRGNPTVEVEVLTESGAFGRALVPSGASTGEHEAVELRDGDKSRYLGKGVTKAVDNVNEIIAPELIEGEFSVLEQVSIDKMMIQLDGTENKGKLGANAILGVSIAVARAAADLLGQPLYKYLGGFNGKQLPVPMMNIVNGGSHSDAPIAFQEFMVLPVGAESFKESLRWGAEIFHNLKSILKNRGLETAVGDEGGFAPKFEGTEDAVETILEAIKAVGLEPGKDVFLGFDCASSEFFEDGVYNYAKFEGENGAKRSAEEQVDYLEELVNKYPIITIEDGMDENDWDGWKVLTDRIGDKVQLVGDDLFVTNTVKLSEGIEKGIGNSILIKVNQIGTLTETFDAIEMAQKAGYTAVVSHRSGETEDTTISDIAVATNAGQIKTGSLSRTDRIAKYNQLLRIEDELYETGKFDGLKSFYNLSK.

Position 165 (Gln165) interacts with (2R)-2-phosphoglycerate. The active-site Proton donor is Glu207. Residues Asp244, Glu291, and Asp318 each coordinate Mg(2+). Positions 343, 372, 373, and 394 each coordinate (2R)-2-phosphoglycerate. Lys343 acts as the Proton acceptor in catalysis.

It belongs to the enolase family. It depends on Mg(2+) as a cofactor.

The protein localises to the cytoplasm. Its subcellular location is the secreted. It is found in the cell surface. It carries out the reaction (2R)-2-phosphoglycerate = phosphoenolpyruvate + H2O. Its pathway is carbohydrate degradation; glycolysis; pyruvate from D-glyceraldehyde 3-phosphate: step 4/5. Catalyzes the reversible conversion of 2-phosphoglycerate (2-PG) into phosphoenolpyruvate (PEP). It is essential for the degradation of carbohydrates via glycolysis. This is Enolase from Staphylococcus saprophyticus subsp. saprophyticus (strain ATCC 15305 / DSM 20229 / NCIMB 8711 / NCTC 7292 / S-41).